The primary structure comprises 804 residues: Enhancer of polycomb homolog 2 (804 aa).

4 disordered regions span residues 372–398 (QSSD…PDGS), 484–507 (GFSS…SDRH), 602–623 (QQSQ…KSDC), and 642–669 (NSPT…VQPS). Residues 602–611 (QQSQQSLQQS) show a composition bias toward low complexity. The segment covering 654-669 (DQNAGHSNLNGVVQPS) has biased composition (polar residues).

It belongs to the enhancer of polycomb family.

It is found in the nucleus. Functionally, may play a role in transcription or DNA repair. In Xenopus tropicalis (Western clawed frog), this protein is Enhancer of polycomb homolog 2 (epc2).